Here is a 452-residue protein sequence, read N- to C-terminus: Trigger factor (452 aa).

One can recognise a PPIase FKBP-type domain in the interval 162–247 (GDTVTIDYKG…IHEVKSKQLP (86 aa)). The interval 427-452 (AKAKLEAKEAEEAEDKEEAEDKKENK) is disordered.

This sequence belongs to the FKBP-type PPIase family. Tig subfamily.

The protein localises to the cytoplasm. It catalyses the reaction [protein]-peptidylproline (omega=180) = [protein]-peptidylproline (omega=0). Functionally, involved in protein export. Acts as a chaperone by maintaining the newly synthesized protein in an open conformation. Functions as a peptidyl-prolyl cis-trans isomerase. This Lactobacillus helveticus (strain DPC 4571) protein is Trigger factor.